The sequence spans 119 residues: Large ribosomal subunit protein bL20 (119 aa).

The protein belongs to the bacterial ribosomal protein bL20 family.

Its function is as follows. Binds directly to 23S ribosomal RNA and is necessary for the in vitro assembly process of the 50S ribosomal subunit. It is not involved in the protein synthesizing functions of that subunit. The sequence is that of Large ribosomal subunit protein bL20 from Rhodopseudomonas palustris (strain BisB18).